Here is a 721-residue protein sequence, read N- to C-terminus: uncharacterized protein (721 aa).

The chain crosses the membrane as a helical span at residues 6–26 (QLIFVNFYVILIIWWFVMGIL). ATP is bound at residue 308 to 315 (GGTGSGKT).

The protein belongs to the GSP E family. Post-translationally, this protein undergoes a protein self splicing that involves a post-translational excision of the intervening region (intein) followed by peptide ligation.

It is found in the membrane. This is an uncharacterized protein from Methanocaldococcus jannaschii (strain ATCC 43067 / DSM 2661 / JAL-1 / JCM 10045 / NBRC 100440) (Methanococcus jannaschii).